The primary structure comprises 382 residues: Glucose-1-phosphate adenylyltransferase (382 aa).

Alpha-D-glucose 1-phosphate-binding positions include Tyr-100, Gly-165, 180-181 (EK), and Ser-191.

Belongs to the bacterial/plant glucose-1-phosphate adenylyltransferase family. In terms of assembly, homotetramer.

It catalyses the reaction alpha-D-glucose 1-phosphate + ATP + H(+) = ADP-alpha-D-glucose + diphosphate. Its pathway is glycan biosynthesis; glycogen biosynthesis. In terms of biological role, involved in the biosynthesis of ADP-glucose, a building block required for the elongation reactions to produce glycogen. Catalyzes the reaction between ATP and alpha-D-glucose 1-phosphate (G1P) to produce pyrophosphate and ADP-Glc. The protein is Glucose-1-phosphate adenylyltransferase of Clostridium novyi (strain NT).